The sequence spans 279 residues: MNDRNNRWRTMKDEETFEISIPFEEAPHLDSQILYRLSPSRRNVEEPPEGASPTLALMSSVKAQLHMALERNSWLQKRIEDLEEERDFLRCQLDKFISSARMDAEDYCRMKPGPRRVDGDSRAGVGEASDPESAASSFSGVSEDGSASERKRQKQKGSTSRKRFGKTKARERQRVKDADGVLCRYKKILGTFQKLKSMSRAFEHHRVDRNTVALTTPIAELLIVAPEKLAEVGEFDPSKERLLEYSRRCFLALDDETLKKVQALKKSKLLLPITYRFKR.

Positions 62–101 form a coiled coil; sequence KAQLHMALERNSWLQKRIEDLEEERDFLRCQLDKFISSAR. Positions 109 to 121 are enriched in basic and acidic residues; that stretch reads RMKPGPRRVDGDS. Residues 109–173 are disordered; sequence RMKPGPRRVD…FGKTKARERQ (65 aa). Position 129 is a phosphoserine (S129). Positions 151 to 164 match the Bipartite nuclear localization signal motif; sequence KRQKQKGSTSRKRF. A compositionally biased stretch (basic residues) spans 151 to 167; sequence KRQKQKGSTSRKRFGKT.

Interacts with p53/TP53.

It localises to the nucleus. Its function is as follows. Promotes the degradation of p53/TP53 protein and inhibits its transactivity. The protein is Coiled-coil domain-containing protein 106 (Ccdc106) of Mus musculus (Mouse).